The chain runs to 349 residues: MSETQSWSSVLIALLAREDLSVADASWAMRQVMTGEATDAQIAAFLIALRAKGETVDEIVGFRDAVLDHAVGLPVNSMALDIVGTGGDRFGTVNISTTAAIVAAGAGVPVIKHGNRAASSSSGSSDVLAALGIDLTLPPERVAEVLRATGITFAFASAFHPGFANAAAVRSQLGVPTVFNILGPLCNPARPEASAVGVAPLDRVPLIVGVFQTRGATALVFRGDDGLDELSTTGHSHVWEVSRGLVTEHDIDPRDLGLPTAQIEDLLGKDAAHNAAVVRAVLAGQEGPVRDIVVLNAAAGLVSYELAADPSRVQEPILDRFRSHMAVAAEAIDSGAAVSKLEEWVAATR.

Residues Gly84, 87-88 (GD), Thr92, 94-97 (NIST), 112-120 (KHGNRAASS), and Ser124 each bind 5-phospho-alpha-D-ribose 1-diphosphate. Gly84 is an anthranilate binding site. Residue Ser96 participates in Mg(2+) binding. Asn115 contributes to the anthranilate binding site. Residue Arg170 coordinates anthranilate. Mg(2+)-binding residues include Asp228 and Glu229.

It belongs to the anthranilate phosphoribosyltransferase family. As to quaternary structure, homodimer. The cofactor is Mg(2+).

The enzyme catalyses N-(5-phospho-beta-D-ribosyl)anthranilate + diphosphate = 5-phospho-alpha-D-ribose 1-diphosphate + anthranilate. It functions in the pathway amino-acid biosynthesis; L-tryptophan biosynthesis; L-tryptophan from chorismate: step 2/5. Functionally, catalyzes the transfer of the phosphoribosyl group of 5-phosphorylribose-1-pyrophosphate (PRPP) to anthranilate to yield N-(5'-phosphoribosyl)-anthranilate (PRA). This is Anthranilate phosphoribosyltransferase from Leifsonia xyli subsp. xyli (strain CTCB07).